A 1140-amino-acid polypeptide reads, in one-letter code: TBC1 domain family member 8 (1140 aa).

GRAM domains are found at residues 145 to 212 (VKFE…ERTS) and 285 to 353 (EFFR…EKME). The region spanning 505–692 (GIPESLRGRL…NVVDCFFYDG (188 aa)) is the Rab-GAP TBC domain. The interval 1031 to 1070 (GQRGSSSGSCSQECGEELRASAPSPEDSVFADTGKTPQDS) is disordered. Positions 1032-1043 (QRGSSSGSCSQE) are enriched in low complexity.

May act as a GTPase-activating protein for Rab family protein(s). The chain is TBC1 domain family member 8 (TBC1D8) from Homo sapiens (Human).